We begin with the raw amino-acid sequence, 715 residues long: Polyribonucleotide nucleotidyltransferase (715 aa).

Residues Asp500 and Asp506 each contribute to the Mg(2+) site. One can recognise a KH domain in the interval 567–634; the sequence is PKVKMIRINP…AYIESLVREA (68 aa). Positions 637 to 712 constitute an S1 motif domain; sequence GELYEAKVTR…ERGRVDLSRK (76 aa).

Belongs to the polyribonucleotide nucleotidyltransferase family. The cofactor is Mg(2+).

Its subcellular location is the cytoplasm. The catalysed reaction is RNA(n+1) + phosphate = RNA(n) + a ribonucleoside 5'-diphosphate. Involved in mRNA degradation. Catalyzes the phosphorolysis of single-stranded polyribonucleotides processively in the 3'- to 5'-direction. The polypeptide is Polyribonucleotide nucleotidyltransferase (Acholeplasma laidlawii (strain PG-8A)).